A 442-amino-acid polypeptide reads, in one-letter code: MASLAAACRVSARLAARKLQHDAAVRGFRSSAAALAAQNFMMPALSPTMTEGNIASWRVKEGERFSAGDVLLEIETDKATMDVEAQEDGILMKIIQPDGSKGVQVGTRIAVVAEEGDDITKLEIPPDEGPQQLKAAAPAPAPTPAPAPASPQPQFAAPTPSPPKASTKVPARKYPLLPSVHQLIKENGLDESAVSNITPTGPGGRILKGDVLAYLGKINPNTPAQISARFEKASHLDLSNVKVAKPVEPEKPQEEKASAPAPAPRAPEPPAKAVVSLPISLSAVLEAQQRINKKLGIFLPLSTFISRATELANEELPLPTNYQPTADELFDQVLGLDKVPGYVSAAKQRATRGNYVPDIKAPIPPKAAPKPKQKKIDIIDILAAAPKAKSVKPAGPSLVPGAVTEGLNVFSLQVPKTEERRAKVFLERVKHVLENEPGRLVL.

The N-terminal 35 residues, 1-35 (MASLAAACRVSARLAARKLQHDAAVRGFRSSAAAL), are a transit peptide targeting the mitochondrion. Residues 37–113 (AQNFMMPALS…QVGTRIAVVA (77 aa)) form the Lipoyl-binding domain. Residue Lys-78 is modified to N6-lipoyllysine. A disordered region spans residues 119-169 (ITKLEIPPDEGPQQLKAAAPAPAPTPAPAPASPQPQFAAPTPSPPKASTKV). Residues 139–151 (APAPTPAPAPASP) show a composition bias toward pro residues. Low complexity predominate over residues 152–169 (QPQFAAPTPSPPKASTKV). A Peripheral subunit-binding (PSBD) domain is found at 175-215 (PLLPSVHQLIKENGLDESAVSNITPTGPGGRILKGDVLAYL). The segment at 244-269 (AKPVEPEKPQEEKASAPAPAPRAPEP) is disordered. The span at 245 to 257 (KPVEPEKPQEEKA) shows a compositional bias: basic and acidic residues. The interval 317 to 336 (PLPTNYQPTADELFDQVLGL) is interaction to the E2 core.

Belongs to the 2-oxoacid dehydrogenase family. In terms of assembly, eukaryotic pyruvate dehydrogenase (PDH) complexes are organized as a core consisting of the oligomeric dihydrolipoamide acetyl-transferase (E2), around which are arranged multiple copies of pyruvate dehydrogenase (E1), dihydrolipoamide dehydrogenase (E3) and protein X (E3BP) bound by non-covalent bonds. The Chaetomium thermophilum PDH complex contains 60 E2 units, 12 E3BP units, about 20 E1 units, and 12 or more E3 units. The units are organized in 1 E2 60-mer, 4 E3BP trimers, about 20 E1 tetramers, and a maximum of 12 E3 dimers. The E3BP trimers are bound inside the icosahedral core with tetrahedral symmetry.

The protein resides in the mitochondrion. The 10-megadalton pyruvate dehydrogenase complex contains multiple copies of three enzymatic components: pyruvate dehydrogenase (E1), dihydrolipoamide acetyltransferase (E2) and lipoamide dehydrogenase (E3) and catalyzes the overall oxidative decarboxylation of pyruvate to form acetyl-CoA and CO(2). E3BP is responsible for tethering E3 in proximity to the core, forming the entire metabolon, and the number of E3s is limited by the number of E3BPs. Within the complex, pyruvate and thiamine pyrophosphate (TPP or vitamin B1) are bound by pyruvate dehydrogenase E1 subunits alpha and beta and pyruvate is decarboxylated leading to the 2-carbon hydrohyethyl bound to TPP. The E2 component contains covalently-bound lipoyl cofactors and transfers the hydroxyethyl group from TPP to an oxidized form of covalently bound lipoamide, and the resulting acetyl group is then transferred to free coenzyme A to form acetyl-CoA and reduced dihydrolipoamide-E2. Finally, the flavoprotein dihydrolipoamide dehydrogenase (E3) re-oxidizes the lipoyl group of dihydrolipoamide-E2 to form lipoamide-E2 and NADH. A fourth subunit, E3BP, is responsible for tethering E3 in proximity to the core, forming the entire metabolon. This chain is Pyruvate dehydrogenase complex protein X component, mitochondrial, found in Chaetomium thermophilum (strain DSM 1495 / CBS 144.50 / IMI 039719) (Thermochaetoides thermophila).